A 467-amino-acid polypeptide reads, in one-letter code: Septin-10 (467 aa).

Residues 63 to 329 (QGFCFNILCV…ELYRRCKLEE (267 aa)) enclose the Septin-type G domain. Positions 73 to 80 (GETGIGKS) are G1 motif. Residues 73–80 (GETGIGKS), Gly-128, 209–217 (KADTVSKTE), Gly-263, and Arg-278 each bind GTP. The tract at residues 125–128 (NTVG) is G3 motif. The tract at residues 208–211 (AKAD) is G4 motif.

This sequence belongs to the TRAFAC class TrmE-Era-EngA-EngB-Septin-like GTPase superfamily. Septin GTPase family. As to quaternary structure, septins polymerize into heterooligomeric protein complexes that form filaments, and can associate with cellular membranes, actin filaments and microtubules. GTPase activity is required for filament formation. Interacts with ADGB. In terms of processing, proteolytically cleaved in vitro in a calmodulin-dependent manner.

It localises to the cytoplasm. The protein resides in the cytoskeleton. It is found in the cell projection. Its subcellular location is the cilium. The protein localises to the flagellum. In terms of biological role, filament-forming cytoskeletal GTPase. May play a role in cytokinesis (Potential). This Pongo abelii (Sumatran orangutan) protein is Septin-10.